The following is a 29-amino-acid chain: Galanin (29 aa).

The residue at position 29 (alanine 29) is an Alanine amide.

This sequence belongs to the galanin family.

The protein localises to the secreted. Functionally, contracts smooth muscle of the gastrointestinal and genitourinary tract, regulates growth hormone release, modulates insulin release, and may be involved in the control of adrenal secretion. The sequence is that of Galanin (gal) from Oncorhynchus mykiss (Rainbow trout).